We begin with the raw amino-acid sequence, 103 residues long: Putative glutaredoxin-C14 (103 aa).

Positions 1–102 (MDRVMKLASE…PMLKNAGALW (102 aa)) constitute a Glutaredoxin domain. A disulfide bridge connects residues C21 and C24. The Responsive for interaction with TGA factors signature appears at 100-103 (ALWL).

It belongs to the glutaredoxin family. CC-type subfamily.

Its subcellular location is the cytoplasm. It localises to the nucleus. Its function is as follows. Has a glutathione-disulfide oxidoreductase activity in the presence of NADPH and glutathione reductase. Reduces low molecular weight disulfides and proteins. The protein is Putative glutaredoxin-C14 (GRXC14) of Oryza sativa subsp. japonica (Rice).